The sequence spans 344 residues: Ion-translocating oxidoreductase complex subunit D (344 aa).

The next 4 helical transmembrane spans lie at 23-43 (LVLGACVPGLLTLTWLYGPGT), 44-64 (LLNLAWASLVALACEAAMLAL), 77-99 (SALVTALLLAVALPPYAPWWLTL), and 120-140 (PFNPAMLGYVVALVSFPLEMT). At T172 the chain carries FMN phosphoryl threonine. A run of 5 helical transmembrane segments spans residues 198 to 218 (LGSAGSEWVNLAFLLGGLFLL), 222 to 242 (LFTWHAPLGMLAGLFAMSLLF), 252 to 272 (GSPLFHLFSGATMLGAFFIVT), 285 to 305 (LVFGLGVGVLTYVIRAWGGYP), and 306 to 326 (DGMAFAVLLMNLAAPTIDYYT).

This sequence belongs to the NqrB/RnfD family. The complex is composed of six subunits: RnfA, RnfB, RnfC, RnfD, RnfE and RnfG. Requires FMN as cofactor.

The protein resides in the cell inner membrane. In terms of biological role, part of a membrane-bound complex that couples electron transfer with translocation of ions across the membrane. The polypeptide is Ion-translocating oxidoreductase complex subunit D (Pseudomonas aeruginosa (strain LESB58)).